The chain runs to 434 residues: Serine--tRNA ligase (434 aa).

An L-serine-binding site is contributed by 239 to 241 (TAE). ATP is bound at residue 270–272 (RSE). L-serine is bound at residue Glu-293. Residue 357-360 (EISS) participates in ATP binding. Ser-392 serves as a coordination point for L-serine.

The protein belongs to the class-II aminoacyl-tRNA synthetase family. Type-1 seryl-tRNA synthetase subfamily. As to quaternary structure, homodimer. The tRNA molecule binds across the dimer.

The protein resides in the cytoplasm. The enzyme catalyses tRNA(Ser) + L-serine + ATP = L-seryl-tRNA(Ser) + AMP + diphosphate + H(+). It catalyses the reaction tRNA(Sec) + L-serine + ATP = L-seryl-tRNA(Sec) + AMP + diphosphate + H(+). Its pathway is aminoacyl-tRNA biosynthesis; selenocysteinyl-tRNA(Sec) biosynthesis; L-seryl-tRNA(Sec) from L-serine and tRNA(Sec): step 1/1. In terms of biological role, catalyzes the attachment of serine to tRNA(Ser). Is also able to aminoacylate tRNA(Sec) with serine, to form the misacylated tRNA L-seryl-tRNA(Sec), which will be further converted into selenocysteinyl-tRNA(Sec). The polypeptide is Serine--tRNA ligase (Cupriavidus necator (strain ATCC 17699 / DSM 428 / KCTC 22496 / NCIMB 10442 / H16 / Stanier 337) (Ralstonia eutropha)).